Here is a 141-residue protein sequence, read N- to C-terminus: Hemoglobin subunit alpha (141 aa).

The region spanning 1–141 (VLSSKDKANV…VSTVLTSKYR (141 aa)) is the Globin domain. Ser-3 is subject to Phosphoserine. An N6-succinyllysine mark is found at Lys-7 and Lys-11. Lys-16 is subject to N6-acetyllysine; alternate. Residue Lys-16 is modified to N6-succinyllysine; alternate. The residue at position 24 (Tyr-24) is a Phosphotyrosine. At Lys-40 the chain carries N6-succinyllysine. Ser-49 carries the post-translational modification Phosphoserine. Residue His-58 participates in O2 binding. His-87 contributes to the heme b binding site. Position 102 is a phosphoserine (Ser-102). Residue Thr-108 is modified to Phosphothreonine. Phosphoserine is present on Ser-124. Thr-134 and Thr-137 each carry phosphothreonine. Ser-138 carries the post-translational modification Phosphoserine.

It belongs to the globin family. In terms of assembly, heterotetramer of two alpha chains and two beta chains. As to expression, red blood cells.

Its function is as follows. Involved in oxygen transport from the lung to the various peripheral tissues. Functionally, hemopressin acts as an antagonist peptide of the cannabinoid receptor CNR1. Hemopressin-binding efficiently blocks cannabinoid receptor CNR1 and subsequent signaling. The polypeptide is Hemoglobin subunit alpha (HBA) (Lama vicugna (Vicugna)).